The following is a 192-amino-acid chain: Casparian strip membrane protein 4 (192 aa).

Residues 1-29 lie on the Cytoplasmic side of the membrane; sequence MTKDVVIEHGESSKAPLVPAPVAAGVGRA. A helical transmembrane segment spans residues 30–50; it reads VSIADVFLRFLSIVATIASAI. The Extracellular portion of the chain corresponds to 51–79; it reads SMGTTNETLPFFTQFIQFEAKYSDLPSFT. An N-linked (GlcNAc...) asparagine glycan is attached at asparagine 56. The chain crosses the membrane as a helical span at residues 80–100; that stretch reads FFVAANAVVCTYLVLSIPLSI. Residues 101–112 are Cytoplasmic-facing; that stretch reads VHIIRPRARYSR. Residues 113–133 form a helical membrane-spanning segment; the sequence is LILVFFDAVMLALLTAGASAA. Over 134 to 166 the chain is Extracellular; it reads AAIVYLAHKGNVRANWFAICQQFDSFCERISGS. Residues 167–187 traverse the membrane as a helical segment; it reads LIGSFAAMVLLIVLIFLSAFA. Topologically, residues 188–192 are cytoplasmic; the sequence is LARRH.

It belongs to the Casparian strip membrane proteins (CASP) family. In terms of assembly, homodimer and heterodimers.

The protein localises to the cell membrane. In terms of biological role, regulates membrane-cell wall junctions and localized cell wall deposition. Required for establishment of the Casparian strip membrane domain (CSD) and the subsequent formation of Casparian strips, a cell wall modification of the root endodermis that determines an apoplastic barrier between the intraorganismal apoplasm and the extraorganismal apoplasm and prevents lateral diffusion. This Sorghum bicolor (Sorghum) protein is Casparian strip membrane protein 4.